The sequence spans 576 residues: uncharacterized protein (576 aa).

The segment at 41–78 is disordered; that stretch reads EKESESKLNSKSTTLQSSDSEDWDSEENEDDITDVGVP. Positions 49-58 are enriched in low complexity; that stretch reads NSKSTTLQSS. The span at 59 to 73 shows a compositional bias: acidic residues; it reads DSEDWDSEENEDDIT. 5 WD repeats span residues 87–126, 195–235, 248–288, 296–335, and 393–433; these read GHSK…ATNP, GHIA…SQLE, LSRI…KRPV, LPQQ…KCVN, and TVTA…RGVK. The tract at residues 547–576 is disordered; that stretch reads SETQPTPIYQGVTEGDISSEEGNPSKKQKR.

This is an uncharacterized protein from Schizosaccharomyces pombe (strain 972 / ATCC 24843) (Fission yeast).